A 512-amino-acid chain; its full sequence is Glycerol-3-phosphate dehydrogenase (512 aa).

16 to 44 serves as a coordination point for FAD; it reads DVAVVGGGINGVGIAADAAGRGLSVFLCE.

This sequence belongs to the FAD-dependent glycerol-3-phosphate dehydrogenase family. Requires FAD as cofactor.

Its subcellular location is the cytoplasm. It catalyses the reaction a quinone + sn-glycerol 3-phosphate = dihydroxyacetone phosphate + a quinol. The sequence is that of Glycerol-3-phosphate dehydrogenase (glpD) from Pseudomonas aeruginosa (strain ATCC 15692 / DSM 22644 / CIP 104116 / JCM 14847 / LMG 12228 / 1C / PRS 101 / PAO1).